Consider the following 190-residue polypeptide: Peptidyl-tRNA hydrolase (190 aa).

Tyr-19 contributes to the tRNA binding site. The active-site Proton acceptor is His-24. Positions 72, 74, and 121 each coordinate tRNA.

It belongs to the PTH family.

It localises to the mitochondrion. It catalyses the reaction an N-acyl-L-alpha-aminoacyl-tRNA + H2O = an N-acyl-L-amino acid + a tRNA + H(+). Peptidyl-tRNA hydrolase involved in the recycling of tRNA-Lys from diacetyl-lysyl-tRNA-Lys and is important for mitochondrial function. The polypeptide is Peptidyl-tRNA hydrolase (PTH1) (Saccharomyces cerevisiae (strain ATCC 204508 / S288c) (Baker's yeast)).